A 155-amino-acid polypeptide reads, in one-letter code: Ribonuclease H (155 aa).

In terms of domain architecture, RNase H type-1 spans 1 to 143; it reads MNQVEIYTDG…ADALANRGVD (143 aa). Residues Asp9, Glu47, Asp69, and Asp135 each coordinate Mg(2+).

The protein belongs to the RNase H family. Monomer. Mg(2+) is required as a cofactor.

Its subcellular location is the cytoplasm. It carries out the reaction Endonucleolytic cleavage to 5'-phosphomonoester.. Functionally, endonuclease that specifically degrades the RNA of RNA-DNA hybrids. This Verminephrobacter eiseniae (strain EF01-2) protein is Ribonuclease H.